We begin with the raw amino-acid sequence, 241 residues long: Neuromodulin (241 aa).

Residues 1–26 show a composition bias toward basic and acidic residues; that stretch reads TKQVEKNEDGDQKIEQDGIKPEDKAH. The disordered stretch occupies residues 1–241; the sequence is TKQVEKNEDG…EESKADQENA (241 aa). In terms of domain architecture, IQ spans 25 to 54; the sequence is AHKAATKIQASFRGHITRKKLKGEKKGDAP. Composition is skewed to low complexity over residues 80–95 and 118–131; these read APAATEAAAADSAQQE and SEQPAPQAATPAAS. Basic and acidic residues-rich tracts occupy residues 132-147 and 159-171; these read SEEKTAAAAAPEREST and KADEAQDKEEPKQ. A compositionally biased stretch (low complexity) spans 172–198; sequence ADVPAADTTATTTPAAEDATAKATAQP. Composition is skewed to basic and acidic residues over residues 208–220 and 232–241; these read TEEKTDAVEETKP and EESKADQENA.

This sequence belongs to the neuromodulin family. Binds calmodulin with a greater affinity in the absence of Ca(2+) than in its presence. Palmitoylated. Palmitoylation is essential for plasma membrane association.

It is found in the cell membrane. It localises to the cell projection. The protein resides in the growth cone membrane. The protein localises to the synapse. Its subcellular location is the filopodium membrane. This protein is associated with nerve growth. It is a major component of the motile 'growth cones' that form the tips of elongating axons. Plays a role in axonal and dendritic filopodia induction. The chain is Neuromodulin (GAP43) from Serinus canaria (Island canary).